The primary structure comprises 88 residues: Large ribosomal subunit protein eL15 (88 aa).

Belongs to the eukaryotic ribosomal protein eL15 family.

The sequence is that of Large ribosomal subunit protein eL15 (RPL15) from Brassica napus (Rape).